The sequence spans 744 residues: Protein zyg-11 homolog B (744 aa).

LRR repeat units lie at residues 185 to 208 (LPRL…LACK), 216 to 236 (MHHL…VREL), and 237 to 261 (KHLN…LLEQ).

Belongs to the zyg-11 family. As to quaternary structure, interacts with ELOC/Elongin C. Part of an E3 ubiquitin ligase complex including ZYG11B, CUL2 and Elongin BC.

Its function is as follows. Serves as substrate adapter subunit in the E3 ubiquitin ligase complex ZYG11B-CUL2-Elongin BC. Acts redudantly with ZER1 to target substrates bearing N-terminal glycine degrons for proteasomal degradation. Involved in the clearance of proteolytic fragments generated by caspase cleavage during apoptosis since N-terminal glycine degrons are strongly enriched at caspase cleavage sites. Also important in the quality control of protein N-myristoylation in which N-terminal glycine degrons are conditionally exposed after a failure of N-myristoylation. This is Protein zyg-11 homolog B from Mus musculus (Mouse).